The primary structure comprises 478 residues: Chromosomal replication initiator protein DnaA (478 aa).

The domain I, interacts with DnaA modulators stretch occupies residues Met-1–Gln-90. Residues Pro-91–Ser-141 are domain II. The domain III, AAA+ region stretch occupies residues Tyr-142–Ser-358. Residues Gly-186, Gly-188, Lys-189, and Thr-190 each coordinate ATP. Positions His-359–Thr-478 are domain IV, binds dsDNA.

The protein belongs to the DnaA family. Oligomerizes as a right-handed, spiral filament on DNA at oriC.

The protein localises to the cytoplasm. In terms of biological role, plays an essential role in the initiation and regulation of chromosomal replication. ATP-DnaA binds to the origin of replication (oriC) to initiate formation of the DNA replication initiation complex once per cell cycle. Binds the DnaA box (a 9 base pair repeat at the origin) and separates the double-stranded (ds)DNA. Forms a right-handed helical filament on oriC DNA; dsDNA binds to the exterior of the filament while single-stranded (ss)DNA is stabiized in the filament's interior. The ATP-DnaA-oriC complex binds and stabilizes one strand of the AT-rich DNA unwinding element (DUE), permitting loading of DNA polymerase. After initiation quickly degrades to an ADP-DnaA complex that is not apt for DNA replication. Binds acidic phospholipids. The sequence is that of Chromosomal replication initiator protein DnaA from Azotobacter vinelandii (strain DJ / ATCC BAA-1303).